The chain runs to 236 residues: MADDWESAADSEIVIRPNATNNINKWEGEDDDEDVKESWEDEEEKKDEEKPTKTEAPVKTKPNKALKAKLEEQERLNEEEERKRLANMTAEEKLAEKLRLQKIQEESDLKSALDTFGVTSIGGGLDAFNPQSKEEFKEFGATLSWKVAQYRESVHFPEFIEDLVRSLCVNLSAADIKKVKMSVESLHSEKQKMEKANAKKSAAKAKGKVSLRKESDDIDDYQKYGNDFTDDYDDFM.

Disordered stretches follow at residues 1–88 (MADD…LANM) and 188–236 (SEKQ…DDFM). Residues 28 to 46 (GEDDDEDVKESWEDEEEKK) are compositionally biased toward acidic residues. Composition is skewed to basic and acidic residues over residues 47–58 (DEEKPTKTEAPV), 68–88 (AKLE…LANM), and 188–197 (SEKQKMEKAN). Coiled-coil stretches lie at residues 61–112 (KPNK…LKSA) and 174–209 (ADIK…KGKV). The span at 201-210 (SAAKAKGKVS) shows a compositional bias: basic residues.

This sequence belongs to the eIF-3 subunit J family. As to quaternary structure, component of the eukaryotic translation initiation factor 3 (eIF-3) complex. The eIF-3 complex interacts with pix.

Its subcellular location is the cytoplasm. Functionally, component of the eukaryotic translation initiation factor 3 (eIF-3) complex, which is involved in protein synthesis of a specialized repertoire of mRNAs and, together with other initiation factors, stimulates binding of mRNA and methionyl-tRNAi to the 40S ribosome. The eIF-3 complex specifically targets and initiates translation of a subset of mRNAs involved in cell proliferation. The polypeptide is Eukaryotic translation initiation factor 3 subunit J (Drosophila virilis (Fruit fly)).